Here is a 574-residue protein sequence, read N- to C-terminus: uncharacterized protein (574 aa).

Positions 297-317 are disordered; that stretch reads SAASKPRKRKKDEVSGAQVNS.

This is an uncharacterized protein from Mus musculus (Mouse).